The sequence spans 279 residues: Ribonuclease Z (279 aa).

Residues His64, His66, Asp68, His69, His134, Asp191, and His245 each contribute to the Zn(2+) site. The active-site Proton acceptor is the Asp68.

It belongs to the RNase Z family. In terms of assembly, homodimer. It depends on Zn(2+) as a cofactor.

The catalysed reaction is Endonucleolytic cleavage of RNA, removing extra 3' nucleotides from tRNA precursor, generating 3' termini of tRNAs. A 3'-hydroxy group is left at the tRNA terminus and a 5'-phosphoryl group is left at the trailer molecule.. Functionally, zinc phosphodiesterase, which displays some tRNA 3'-processing endonuclease activity. Probably involved in tRNA maturation, by removing a 3'-trailer from precursor tRNA. The protein is Ribonuclease Z of Methanopyrus kandleri (strain AV19 / DSM 6324 / JCM 9639 / NBRC 100938).